A 51-amino-acid polypeptide reads, in one-letter code: DNA-directed RNA polymerase subunit Rpo12 (51 aa).

Residues Cys-14, Cys-29, and Cys-32 each coordinate Zn(2+).

It belongs to the archaeal Rpo12/eukaryotic RPC10 RNA polymerase subunit family. Part of the RNA polymerase complex. It depends on Zn(2+) as a cofactor.

The protein resides in the cytoplasm. It catalyses the reaction RNA(n) + a ribonucleoside 5'-triphosphate = RNA(n+1) + diphosphate. DNA-dependent RNA polymerase (RNAP) catalyzes the transcription of DNA into RNA using the four ribonucleoside triphosphates as substrates. This Methanopyrus kandleri (strain AV19 / DSM 6324 / JCM 9639 / NBRC 100938) protein is DNA-directed RNA polymerase subunit Rpo12.